Consider the following 281-residue polypeptide: Bifunctional protein FolD (281 aa).

NADP(+) is bound by residues 165–167 (GRG), T192, and V233.

The protein belongs to the tetrahydrofolate dehydrogenase/cyclohydrolase family. Homodimer.

The enzyme catalyses (6R)-5,10-methylene-5,6,7,8-tetrahydrofolate + NADP(+) = (6R)-5,10-methenyltetrahydrofolate + NADPH. The catalysed reaction is (6R)-5,10-methenyltetrahydrofolate + H2O = (6R)-10-formyltetrahydrofolate + H(+). It functions in the pathway one-carbon metabolism; tetrahydrofolate interconversion. Catalyzes the oxidation of 5,10-methylenetetrahydrofolate to 5,10-methenyltetrahydrofolate and then the hydrolysis of 5,10-methenyltetrahydrofolate to 10-formyltetrahydrofolate. The protein is Bifunctional protein FolD of Mycobacterium marinum (strain ATCC BAA-535 / M).